The primary structure comprises 545 residues: Delta 8-(E)-sphingolipid desaturase (545 aa).

The Cytochrome b5 heme-binding domain occupies 1 to 82 (MASHTKDALL…MLAFQIGRIQ (82 aa)). His42 and His65 together coordinate heme. Residues 97–124 (FRHYDENADSEEDDTSGQSQPPSPIFDA) form a disordered region. The helical transmembrane segment at 227–247 (LGWYSVSAVFLGCFWHQLVFS) threads the bilayer. Positions 249-253 (HDAGH) match the Histidine box-1 motif. Residues 262–282 (VDSIIGILIADFLGGLSLGWW) traverse the membrane as a helical segment. A Histidine box-2 motif is present at residues 286-290 (HNVHH). 2 helical membrane passes run 382–402 (IAGQ…CSIP) and 408–428 (LSFL…ITLS). The short motif at 470–474 (QAIHH) is the Histidine box-3 element.

The protein belongs to the fatty acid desaturase type 1 family.

It localises to the membrane. The enzyme catalyses an N-acylsphing-4-enine + 2 Fe(II)-[cytochrome b5] + O2 + 2 H(+) = a (4E,8E)-4-sphinga-4,8-dienine ceramide + 2 Fe(III)-[cytochrome b5] + 2 H2O. Its pathway is lipid metabolism; sphingolipid metabolism. Its function is as follows. Delta(8)-fatty-acid desaturase which introduces a double bond at the 8-position in the long-chain base (LCB) of ceramides. Required for the formation of the di-unsaturated sphingoid base (E,E)-sphinga-4,8-dienine during glucosylceramide (GluCer) biosynthesis. Plays an important role in conidiation. The sequence is that of Delta 8-(E)-sphingolipid desaturase from Emericella nidulans (strain FGSC A4 / ATCC 38163 / CBS 112.46 / NRRL 194 / M139) (Aspergillus nidulans).